A 218-amino-acid chain; its full sequence is Putative glutamine transport system permease protein GlnP (218 aa).

One can recognise an ABC transmembrane type-1 domain in the interval threonine 19–alanine 208. The next 4 membrane-spanning stretches (helical) occupy residues tyrosine 25–valine 45, phenylalanine 57–proline 79, phenylalanine 86–isoleucine 108, and phenylalanine 187–isoleucine 207.

It belongs to the binding-protein-dependent transport system permease family. HisMQ subfamily.

The protein resides in the cell inner membrane. Functionally, part of the binding-protein-dependent transport system for glutamine; probably responsible for the translocation of the substrate across the membrane. The protein is Putative glutamine transport system permease protein GlnP (glnP) of Rickettsia typhi (strain ATCC VR-144 / Wilmington).